Here is a 128-residue protein sequence, read N- to C-terminus: LIM domain-containing protein 2 (128 aa).

Met-1 is subject to N-acetylmethionine. The segment at 1–25 (MFQAAGAAQATPSHEAKGSSGNSTV) is disordered. An LIM zinc-binding domain is found at 39-99 (ETCAACQKTV…KPHFQQLFKS (61 aa)). Zn(2+) is bound by residues Cys-41, Cys-44, His-62, Cys-65, Cys-68, Cys-71, Cys-89, and His-92.

In terms of assembly, interacts with ILK.

Its subcellular location is the cytoplasm. It localises to the nucleus. Functionally, acts as an activator of the protein-kinase ILK, thereby regulating cell motility. In Rattus norvegicus (Rat), this protein is LIM domain-containing protein 2 (Limd2).